Here is a 429-residue protein sequence, read N- to C-terminus: Protein ABERRANT PANICLE ORGANIZATION 1 (429 aa).

Residues 1–11 show a composition bias toward pro residues; that stretch reads MMNPRRLPPLP. The segment at 1–21 is disordered; that stretch reads MMNPRRLPPLPSSTSSASAAD. An F-box domain is found at 25–71; sequence PRVWRRLPQPLVDRILACLPTPSFLRLRAACRRFYHLLFSSPFLHSH. 2 consecutive transmembrane segments (helical) span residues 72–92 and 112–132; these read LLLS…GHLL and VAGG…LAFL. Kelch repeat units follow at residues 229-277, 284-339, and 350-397; these read MAFA…ELGG, RVAL…AEGG, and YVVL…GAAG.

As to quaternary structure, part of a putative SCF (ASK/Cullin/F-box) ubiquitin ligase complex. Interacts with FL/APO2. In terms of tissue distribution, expressed in apical meristems and the lateral organ primordia throughout development. Expressed in seedlings, roots, leaves, shoot apical meristem (SAM), developing panicles, and, at lower levels, in developing seeds.

It localises to the membrane. It functions in the pathway protein modification; protein ubiquitination. Its function is as follows. Component of SCF(ASK-cullin-F-box) E3 ubiquitin ligase complexes, which may mediate the ubiquitination and subsequent proteasomal degradation of target proteins. Together with FL/APO2, involved in the temporal regulation of meristem identity during both vegetative and reproductive developments in an APO2-dependent manner. Promotes spikelet formation by suppressing the precocious conversion of inflorescence meristems to spikelet meristems, probably via a positive regulation of class-C floral homeotic genes, but not of class-B genes, and through the control of cell proliferation in meristems. Mediates culm development and strength/diameter enhancement at internodes. Required for the regulation of the plastochron, floral organ identity, and floral determinacy. Controls the number of primary rachis branches (PRBs). May trigger the formation of vascular bundle systems which, consequently, promote carbohydrate translocation to panicles. Involved in ozone-induced grain yield regulation. The sequence is that of Protein ABERRANT PANICLE ORGANIZATION 1 from Oryza sativa subsp. japonica (Rice).